Reading from the N-terminus, the 199-residue chain is Probable chemoreceptor glutamine deamidase CheD (199 aa).

It belongs to the CheD family.

The catalysed reaction is L-glutaminyl-[protein] + H2O = L-glutamyl-[protein] + NH4(+). In terms of biological role, probably deamidates glutamine residues to glutamate on methyl-accepting chemotaxis receptors (MCPs), playing an important role in chemotaxis. The chain is Probable chemoreceptor glutamine deamidase CheD from Cereibacter sphaeroides (Rhodobacter sphaeroides).